The sequence spans 505 residues: RNA-splicing ligase RtcB homolog (505 aa).

Mn(2+) is bound by residues aspartate 119, cysteine 122, histidine 227, histidine 259, and histidine 353. Asparagine 226–glutamate 230 lines the GMP pocket. GMP contacts are provided by residues histidine 353 to asparagine 354, glycine 402 to methionine 405, serine 409, histidine 428 to glycine 431, and lysine 504. Histidine 428 (GMP-histidine intermediate) is an active-site residue.

The protein belongs to the RtcB family. As to quaternary structure, catalytic component of the tRNA-splicing ligase complex. Mn(2+) serves as cofactor.

The protein localises to the nucleus. It localises to the cytoplasm. It catalyses the reaction a 3'-end 3'-phospho-ribonucleotide-RNA + a 5'-end dephospho-ribonucleoside-RNA + GTP = a ribonucleotidyl-ribonucleotide-RNA + GMP + diphosphate. The enzyme catalyses a 3'-end 2',3'-cyclophospho-ribonucleotide-RNA + a 5'-end dephospho-ribonucleoside-RNA + GTP + H2O = a ribonucleotidyl-ribonucleotide-RNA + GMP + diphosphate + H(+). Catalytic subunit of the tRNA-splicing ligase complex that acts by directly joining spliced tRNA halves to mature-sized tRNAs. Required for the ligation of mRNAs and specifically, regulates xbp-1 mRNA splicing during the endoplasmic reticulum stress-induced unfolded protein response. Has a neuroprotective role in the age-dependent degeneration of dopamine neurons, which is mediated by xbp-1. This is RNA-splicing ligase RtcB homolog from Caenorhabditis elegans.